The primary structure comprises 196 residues: FMN-dependent NADH:quinone oxidoreductase (196 aa).

Residues S10, S16–S18, M93–F96, and T137–G140 each bind FMN.

The protein belongs to the azoreductase type 1 family. In terms of assembly, homodimer. It depends on FMN as a cofactor.

It catalyses the reaction 2 a quinone + NADH + H(+) = 2 a 1,4-benzosemiquinone + NAD(+). The catalysed reaction is N,N-dimethyl-1,4-phenylenediamine + anthranilate + 2 NAD(+) = 2-(4-dimethylaminophenyl)diazenylbenzoate + 2 NADH + 2 H(+). Quinone reductase that provides resistance to thiol-specific stress caused by electrophilic quinones. In terms of biological role, also exhibits azoreductase activity. Catalyzes the reductive cleavage of the azo bond in aromatic azo compounds to the corresponding amines. This Shewanella amazonensis (strain ATCC BAA-1098 / SB2B) protein is FMN-dependent NADH:quinone oxidoreductase.